Consider the following 288-residue polypeptide: Shikimate dehydrogenase (NADP(+)) (288 aa).

Residues 21 to 23 (SLS) and T68 each bind shikimate. The active-site Proton acceptor is the K72. Residues N93 and D108 each contribute to the shikimate site. Residues 132–136 (GNGGA) and L230 each bind NADP(+). Y232 lines the shikimate pocket. Residue G253 participates in NADP(+) binding.

Belongs to the shikimate dehydrogenase family. In terms of assembly, homodimer.

It catalyses the reaction shikimate + NADP(+) = 3-dehydroshikimate + NADPH + H(+). The protein operates within metabolic intermediate biosynthesis; chorismate biosynthesis; chorismate from D-erythrose 4-phosphate and phosphoenolpyruvate: step 4/7. Its function is as follows. Involved in the biosynthesis of the chorismate, which leads to the biosynthesis of aromatic amino acids. Catalyzes the reversible NADPH linked reduction of 3-dehydroshikimate (DHSA) to yield shikimate (SA). This chain is Shikimate dehydrogenase (NADP(+)), found in Crocosphaera subtropica (strain ATCC 51142 / BH68) (Cyanothece sp. (strain ATCC 51142)).